Here is a 496-residue protein sequence, read N- to C-terminus: Probable glycine dehydrogenase (decarboxylating) subunit 2 (496 aa).

K265 bears the N6-(pyridoxal phosphate)lysine mark.

Belongs to the GcvP family. C-terminal subunit subfamily. In terms of assembly, the glycine cleavage system is composed of four proteins: P, T, L and H. In this organism, the P 'protein' is a heterodimer of two subunits. The cofactor is pyridoxal 5'-phosphate.

It catalyses the reaction N(6)-[(R)-lipoyl]-L-lysyl-[glycine-cleavage complex H protein] + glycine + H(+) = N(6)-[(R)-S(8)-aminomethyldihydrolipoyl]-L-lysyl-[glycine-cleavage complex H protein] + CO2. Its function is as follows. The glycine cleavage system catalyzes the degradation of glycine. The P protein binds the alpha-amino group of glycine through its pyridoxal phosphate cofactor; CO(2) is released and the remaining methylamine moiety is then transferred to the lipoamide cofactor of the H protein. This chain is Probable glycine dehydrogenase (decarboxylating) subunit 2, found in Thioalkalivibrio sulfidiphilus (strain HL-EbGR7).